Consider the following 78-residue polypeptide: Large ribosomal subunit protein eL20 (78 aa).

Belongs to the eukaryotic ribosomal protein eL20 family. Part of the 50S ribosomal subunit. Binds 23S rRNA.

The chain is Large ribosomal subunit protein eL20 from Pyrobaculum calidifontis (strain DSM 21063 / JCM 11548 / VA1).